The primary structure comprises 709 residues: MGLNLLPIEMDDIRKRLDREPNEIEWRVIDAVWSEHCSYKSSKIFLKSFSIDSPNVIMGIKDWQDAGAVDIGDGWAIVIKVESHNHPSAIDPFNGAATGVGGIIRDIISKGAKPIALMDMIRVGNLKIRKNVWLLKNIIAGIAAYGNSIGVPVVGGELSFDDTYNDNPLVDVAAIGIVRKDKIKPSIVDKAGLKLVLAGLTGIDGLGGASFASRKLSGEDEIGAVQIADPFAGKIILDVTLEIADKVEAIKDLGGGGLAVAVTEMANGLGAIVDIEKIPLRVKNMDPADVIISETQERMLYAVEEKNVEEVCKAFEEYEYPCSVIGEITSEPIIKFRYFGKDLVSLPTNALLEPPKFLWPIKNVRKNVEEKNVDLSLESTIYTVLSHPDLVSKEWVYSQFDYEVNTSTVVKPGDANGAVVSLPNGKLLAIKADGNPDLCSEDAYECGKGIVAEAYRNLATVGARGMVAVDHLQFGDPKKPEVYYTFVEAIRGIGEATRFFNIPIVGGKVSFYNENSQGKPIKPTPLIVMAGLVQGKLLKNRVEDSSYVVLLGYTRKELGGSLLSKIFKVPSQAPKVRLQEDLLSSEVVIDAINEEKITFAKDISRGGLAASLFNIIVHGYGVEISTKSILSDTDNVVENLFSESSGRFVILTNEPEWIVEKSRSKGIVASIIGKVNKKTSILTIDNTDYDLKTIVNNYFNFLEEVIGNG.

H36 is an active-site residue. ATP is bound by residues Y39 and K80. E82 is a Mg(2+) binding site. Substrate-binding positions include 83-86 (SHNH) and R105. H84 (proton acceptor) is an active-site residue. D106 serves as a coordination point for Mg(2+). Q226 is a binding site for substrate. D252 is a binding site for Mg(2+). Substrate is bound at residue 294–296 (ETQ). The ATP site is built by D470 and G507. Residue S510 participates in substrate binding.

Belongs to the FGAMS family. Monomer. Part of the FGAM synthase complex composed of 1 PurL, 1 PurQ and 2 PurS subunits.

Its subcellular location is the cytoplasm. It catalyses the reaction N(2)-formyl-N(1)-(5-phospho-beta-D-ribosyl)glycinamide + L-glutamine + ATP + H2O = 2-formamido-N(1)-(5-O-phospho-beta-D-ribosyl)acetamidine + L-glutamate + ADP + phosphate + H(+). It participates in purine metabolism; IMP biosynthesis via de novo pathway; 5-amino-1-(5-phospho-D-ribosyl)imidazole from N(2)-formyl-N(1)-(5-phospho-D-ribosyl)glycinamide: step 1/2. Functionally, part of the phosphoribosylformylglycinamidine synthase complex involved in the purines biosynthetic pathway. Catalyzes the ATP-dependent conversion of formylglycinamide ribonucleotide (FGAR) and glutamine to yield formylglycinamidine ribonucleotide (FGAM) and glutamate. The FGAM synthase complex is composed of three subunits. PurQ produces an ammonia molecule by converting glutamine to glutamate. PurL transfers the ammonia molecule to FGAR to form FGAM in an ATP-dependent manner. PurS interacts with PurQ and PurL and is thought to assist in the transfer of the ammonia molecule from PurQ to PurL. This is Phosphoribosylformylglycinamidine synthase subunit PurL from Saccharolobus islandicus (strain Y.N.15.51 / Yellowstone #2) (Sulfolobus islandicus).